A 167-amino-acid polypeptide reads, in one-letter code: Lipoprotein signal peptidase (167 aa).

A run of 4 helical transmembrane segments spans residues 5–25 (ICSTGLRWLWLVVVVLILDLG), 42–62 (LIPYFNLTYAQNFGAAFSFLA), 70–90 (WFFAFIAVAISVVLMVMMYRA), and 102–122 (ALIIGGALGNLFDRLVHGFVI). Active-site residues include Asp123 and Asp141. Residues 137-157 (FNIADMAICIGAGLVIIDSFL) traverse the membrane as a helical segment.

The protein belongs to the peptidase A8 family.

Its subcellular location is the cell inner membrane. It carries out the reaction Release of signal peptides from bacterial membrane prolipoproteins. Hydrolyzes -Xaa-Yaa-Zaa-|-(S,diacylglyceryl)Cys-, in which Xaa is hydrophobic (preferably Leu), and Yaa (Ala or Ser) and Zaa (Gly or Ala) have small, neutral side chains.. The protein operates within protein modification; lipoprotein biosynthesis (signal peptide cleavage). Functionally, this protein specifically catalyzes the removal of signal peptides from prolipoproteins. In Photorhabdus laumondii subsp. laumondii (strain DSM 15139 / CIP 105565 / TT01) (Photorhabdus luminescens subsp. laumondii), this protein is Lipoprotein signal peptidase.